The primary structure comprises 263 residues: N-glycosylase/DNA lyase (263 aa).

8-oxoguanine is bound by residues Q43, S71, and W82. Positions 139–204 (RRYYFENMMG…EDVRIKAYTE (66 aa)) are helix-hairpin-helix. K164 serves as the catalytic Schiff-base intermediate with DNA. 8-oxoguanine is bound by residues F168 and P194. D196 is an active-site residue. Positions 230 and 234 each coordinate 8-oxoguanine.

It belongs to the archaeal N-glycosylase/DNA lyase (AGOG) family.

It catalyses the reaction 2'-deoxyribonucleotide-(2'-deoxyribose 5'-phosphate)-2'-deoxyribonucleotide-DNA = a 3'-end 2'-deoxyribonucleotide-(2,3-dehydro-2,3-deoxyribose 5'-phosphate)-DNA + a 5'-end 5'-phospho-2'-deoxyribonucleoside-DNA + H(+). Its function is as follows. DNA repair enzyme that is part of the base excision repair (BER) pathway; protects from oxidative damage by removing the major product of DNA oxidation, 8-oxoguanine (GO), from single- and double-stranded DNA substrates. This chain is N-glycosylase/DNA lyase, found in Thermococcus kodakarensis (strain ATCC BAA-918 / JCM 12380 / KOD1) (Pyrococcus kodakaraensis (strain KOD1)).